The sequence spans 80 residues: Exodeoxyribonuclease 7 small subunit (80 aa).

This sequence belongs to the XseB family. In terms of assembly, heterooligomer composed of large and small subunits.

The protein resides in the cytoplasm. It catalyses the reaction Exonucleolytic cleavage in either 5'- to 3'- or 3'- to 5'-direction to yield nucleoside 5'-phosphates.. Functionally, bidirectionally degrades single-stranded DNA into large acid-insoluble oligonucleotides, which are then degraded further into small acid-soluble oligonucleotides. This is Exodeoxyribonuclease 7 small subunit from Rickettsia canadensis (strain McKiel).